The following is a 469-amino-acid chain: Acyltransferase clz18 (469 aa).

A run of 7 helical transmembrane segments spans residues 21–41 (GLLS…LGYD), 70–90 (LFTI…CLFF), 134–154 (LSLL…TGFF), 253–273 (ILAA…PLFW), 346–366 (GLIV…LYSL), 391–411 (IYLI…SWVW), and 424–444 (VGFG…AAIF).

The protein belongs to the acyltransferase 3 family.

The protein resides in the membrane. It functions in the pathway secondary metabolite biosynthesis. In terms of biological role, acyltransferase; part of the gene cluster that mediates the biosynthesis of squalestatin S1 (SQS1, also known as zaragozic acid A), a heavily oxidized fungal polyketide that offers potent cholesterol lowering activity by targeting squalene synthase (SS). SQS1 is composed of a 2,8-dioxobicyclic[3.2.1]octane-3,4,5-tricarboxyclic acid core that is connected to two lipophilic polyketide arms. These initial steps feature the priming of an unusual benzoic acid starter unit onto the highly reducing polyketide synthase clz14, followed by oxaloacetate extension and product release to generate a tricarboxylic acid containing product. The phenylalanine ammonia lyase (PAL) clz10 and the acyl-CoA ligase clz12 are involved in transforming phenylalanine into benzoyl-CoA. The citrate synthase-like protein clz17 is involved in connecting the C-alpha-carbons of the hexaketide chain and oxaloacetate to afford the tricarboxylic acid unit. The potential hydrolytic enzymes, clz11 and clz13, are in close proximity to pks2 and may participate in product release. On the other side, the tetraketide arm is synthesized by a the squalestatin tetraketide synthase clz2 and enzymatically esterified to the core in the last biosynthetic step, by the acetyltransferase clz6. The biosynthesis of the tetraketide must involve 3 rounds of chain extension. After the first and second rounds methyl-transfer occurs, and in all rounds of extension the ketoreductase and dehydratase are active. The enoyl reductase and C-MeT of clz2 are not active in the final round of extension. The acetyltransferase clz6 appears to have a broad substrate selectivity for its acyl CoA substrate, allowing the in vitro synthesis of novel squalestatins. The biosynthesis of SQS1 requires several oxidative steps likely performed by oxidoreductases clz3, clz15 and clz16. Finally, in support of the identification of the cluster as being responsible for SQS1 production, the cluster contains a gene encoding a putative squalene synthase (SS) clz20, suggesting a likely mechanism for self-resistance. The sequence is that of Acyltransferase clz18 from Cochliobolus lunatus (Filamentous fungus).